The primary structure comprises 622 residues: Kinesin light chain 2 (622 aa).

The stretch at 78-143 (ILALSSHLGA…KQHLLFMSQI (66 aa)) forms a coiled coil. The span at 145–164 (KLDEDASPNEEKGDVPKDTL) shows a compositional bias: basic and acidic residues. Residues 145–191 (KLDEDASPNEEKGDVPKDTLDDLFPNEDEQSPAPSPGGGDVSGQHGG) are disordered. Ser151, Ser175, and Ser179 each carry phosphoserine. A compositionally biased stretch (gly residues) spans 180-190 (PGGGDVSGQHG). 5 TPR repeats span residues 198 to 231 (LRTLHNLVIQYASQGRYEVAVPLCKQALEDLEKT), 240 to 273 (ATMLNILALVYRDQNKYKEAAHLLNDALAIREKT), 282 to 315 (AATLNNLAVLYGKRGKYKEAEPLCKRALEIREKV), 324 to 357 (AKQLSNLALLCQNQGKAEEVEYYYRRALEIYATR), and 366 to 399 (AKTKNNLASCYLKQGKYQDAETLYKEILTRAHEK). At Ser445 the chain carries Phosphoserine. Residues 449 to 482 (NTTLRSLGALYRRQGKLEAAHTLEDCASRNRKQG) form a TPR 6 repeat. 2 disordered regions span residues 476-548 (SRNR…SFGK) and 563-622 (KLQG…SLVG). Over residues 493–509 (ELLKDGSGRRGDRRSSR) the composition is skewed to basic and acidic residues. Residues Ser508 and Ser521 each carry the phosphoserine modification. Positions 538 to 547 (GSLRRSGSFG) are enriched in low complexity. Phosphoserine is present on residues Ser581, Ser582, Ser589, Ser608, Ser610, and Ser615. Low complexity predominate over residues 601–622 (LSDSRTLSSSSMDLSRRSSLVG).

The protein belongs to the kinesin light chain family. Oligomeric complex composed of two heavy chains and two light chains. Interacts (via TPR repeats) with PLEKHM2.

It localises to the cytoplasm. It is found in the cytoskeleton. The protein resides in the lysosome membrane. In terms of biological role, kinesin is a microtubule-associated force-producing protein that plays a role in organelle transport. The light chain functions in coupling of cargo to the heavy chain or in the modulation of its ATPase activity. Through binding with PLEKHM2 and ARL8B, recruits kinesin-1 to lysosomes and hence direct lysosomes movement toward microtubule plus ends. The sequence is that of Kinesin light chain 2 from Homo sapiens (Human).